The following is a 469-amino-acid chain: UDP-N-acetylmuramate--L-alanine ligase (469 aa).

ATP is bound at residue 113–119 (GAHGKTT).

This sequence belongs to the MurCDEF family.

It localises to the cytoplasm. It catalyses the reaction UDP-N-acetyl-alpha-D-muramate + L-alanine + ATP = UDP-N-acetyl-alpha-D-muramoyl-L-alanine + ADP + phosphate + H(+). It participates in cell wall biogenesis; peptidoglycan biosynthesis. In terms of biological role, cell wall formation. In Syntrophobacter fumaroxidans (strain DSM 10017 / MPOB), this protein is UDP-N-acetylmuramate--L-alanine ligase.